Reading from the N-terminus, the 393-residue chain is NAD(P)H-quinone oxidoreductase subunit H, chloroplastic (393 aa).

It belongs to the complex I 49 kDa subunit family. As to quaternary structure, NDH is composed of at least 16 different subunits, 5 of which are encoded in the nucleus.

It is found in the plastid. The protein localises to the chloroplast thylakoid membrane. The catalysed reaction is a plastoquinone + NADH + (n+1) H(+)(in) = a plastoquinol + NAD(+) + n H(+)(out). It carries out the reaction a plastoquinone + NADPH + (n+1) H(+)(in) = a plastoquinol + NADP(+) + n H(+)(out). Its function is as follows. NDH shuttles electrons from NAD(P)H:plastoquinone, via FMN and iron-sulfur (Fe-S) centers, to quinones in the photosynthetic chain and possibly in a chloroplast respiratory chain. The immediate electron acceptor for the enzyme in this species is believed to be plastoquinone. Couples the redox reaction to proton translocation, and thus conserves the redox energy in a proton gradient. The protein is NAD(P)H-quinone oxidoreductase subunit H, chloroplastic of Lepidium virginicum (Virginia pepperweed).